The sequence spans 308 residues: Ornithine carbamoyltransferase (308 aa).

Carbamoyl phosphate contacts are provided by residues 55–58 (STRT), Q82, R106, and 133–136 (HPCQ). L-ornithine-binding positions include N164, D227, and 231 to 232 (SM). Carbamoyl phosphate-binding positions include 267-268 (CL) and R295.

Belongs to the aspartate/ornithine carbamoyltransferase superfamily. OTCase family.

It localises to the cytoplasm. The enzyme catalyses carbamoyl phosphate + L-ornithine = L-citrulline + phosphate + H(+). Its pathway is amino-acid biosynthesis; L-arginine biosynthesis; L-arginine from L-ornithine and carbamoyl phosphate: step 1/3. In terms of biological role, reversibly catalyzes the transfer of the carbamoyl group from carbamoyl phosphate (CP) to the N(epsilon) atom of ornithine (ORN) to produce L-citrulline. This Prochlorococcus marinus subsp. pastoris (strain CCMP1986 / NIES-2087 / MED4) protein is Ornithine carbamoyltransferase.